Here is a 316-residue protein sequence, read N- to C-terminus: Na(+)-translocating NADH-quinone reductase subunit C (316 aa).

The chain crosses the membrane as a helical span at residues 13-33 (WYIILFIFVLSLIAGTLLSSV). An FMN phosphoryl threonine modification is found at T280.

This sequence belongs to the NqrC family. Composed of six subunits; NqrA, NqrB, NqrC, NqrD, NqrE and NqrF. Requires FMN as cofactor.

It localises to the cell inner membrane. The catalysed reaction is a ubiquinone + n Na(+)(in) + NADH + H(+) = a ubiquinol + n Na(+)(out) + NAD(+). In terms of biological role, NQR complex catalyzes the reduction of ubiquinone-1 to ubiquinol by two successive reactions, coupled with the transport of Na(+) ions from the cytoplasm to the periplasm. NqrA to NqrE are probably involved in the second step, the conversion of ubisemiquinone to ubiquinol. This is Na(+)-translocating NADH-quinone reductase subunit C from Chlamydia trachomatis serovar D (strain ATCC VR-885 / DSM 19411 / UW-3/Cx).